The chain runs to 295 residues: uncharacterized protein (295 aa).

It belongs to the ROK (NagC/XylR) family.

This is an uncharacterized protein from Clostridium perfringens (strain 13 / Type A).